The following is a 428-amino-acid chain: Sporulation kinase B (428 aa).

Over 1–6 the chain is Cytoplasmic; the sequence is MEILKD. A helical transmembrane segment spans residues 7 to 27; it reads YLLHICFILFPILLYQVFWLG. Residues 28-37 lie on the Extracellular side of the membrane; the sequence is KPAILVPKIN. The helical transmembrane segment at 38 to 58 threads the bilayer; the sequence is SGLVTLFACGASVLCIIFPIH. The Cytoplasmic portion of the chain corresponds to 59-68; it reads EMDYIQYGLQ. A helical membrane pass occupies residues 69–89; that stretch reads MIPVIICLFYISTASGLTVAA. Residues 90–99 are Extracellular-facing; it reads SVLCFELLFY. Residues 100–120 traverse the membrane as a helical segment; the sequence is EPSAMFVFTLLPFLIIIPILF. The Cytoplasmic segment spans residues 121-132; it reads QKKWPFMSKAKK. A helical transmembrane segment spans residues 133–153; it reads LLLSLLISCVEIFLFFASSWI. The Extracellular segment spans residues 154-166; the sequence is LSALNILNFQKSG. Residues 167-187 traverse the membrane as a helical segment; sequence IFVYEAAVSGLFRSSVLLLSI. At 188 to 428 the chain is on the cytoplasmic side; that stretch reads YIIESIAENI…TIKLPADLPH (241 aa). One can recognise a Histidine kinase domain in the interval 218-426; it reads SVAHEVRNPL…TVTIKLPADL (209 aa). H221 carries the post-translational modification Phosphohistidine; by autocatalysis.

It localises to the cell membrane. The enzyme catalyses ATP + protein L-histidine = ADP + protein N-phospho-L-histidine.. Phosphorylates the sporulation-regulatory proteins spo0A and spo0F. Spo0F is required for the KinB activity. The polypeptide is Sporulation kinase B (kinB) (Bacillus subtilis (strain 168)).